Consider the following 233-residue polypeptide: Snake venom serine protease BthaTL (233 aa).

Residues 1–224 enclose the Peptidase S1 domain; the sequence is VIGGDECDIN…YLPWIQSIIA (224 aa). Intrachain disulfides connect Cys-7–Cys-138, Cys-25–Cys-41, Cys-73–Cys-231, Cys-117–Cys-185, Cys-149–Cys-164, and Cys-175–Cys-200. Residues His-40 and Asp-85 each act as charge relay system in the active site. Ser-179 functions as the Charge relay system in the catalytic mechanism.

The protein belongs to the peptidase S1 family. Snake venom subfamily. Monomer. In terms of tissue distribution, expressed by the venom gland.

The protein resides in the secreted. In terms of biological role, snake venom serine protease that may act in the hemostasis system of the prey. This is Snake venom serine protease BthaTL from Bothrops alternatus (Urutu).